The primary structure comprises 1092 residues: Isoleucine--tRNA ligase (1092 aa).

The 'HIGH' region motif lies at Pro53–His63. A 'KMSKS' region motif is present at residues Lys613 to Arg617. Residue Lys616 coordinates ATP.

The protein belongs to the class-I aminoacyl-tRNA synthetase family. IleS type 2 subfamily. In terms of assembly, monomer. Requires Zn(2+) as cofactor.

The protein localises to the cytoplasm. It carries out the reaction tRNA(Ile) + L-isoleucine + ATP = L-isoleucyl-tRNA(Ile) + AMP + diphosphate. In terms of biological role, catalyzes the attachment of isoleucine to tRNA(Ile). As IleRS can inadvertently accommodate and process structurally similar amino acids such as valine, to avoid such errors it has two additional distinct tRNA(Ile)-dependent editing activities. One activity is designated as 'pretransfer' editing and involves the hydrolysis of activated Val-AMP. The other activity is designated 'posttransfer' editing and involves deacylation of mischarged Val-tRNA(Ile). The sequence is that of Isoleucine--tRNA ligase from Rickettsia conorii (strain ATCC VR-613 / Malish 7).